A 191-amino-acid polypeptide reads, in one-letter code: Peptidyl-tRNA hydrolase (191 aa).

A tRNA-binding site is contributed by tyrosine 16. Histidine 21 (proton acceptor) is an active-site residue. TRNA is bound by residues phenylalanine 67, asparagine 69, and asparagine 115.

Belongs to the PTH family. Monomer.

It is found in the cytoplasm. It carries out the reaction an N-acyl-L-alpha-aminoacyl-tRNA + H2O = an N-acyl-L-amino acid + a tRNA + H(+). In terms of biological role, hydrolyzes ribosome-free peptidyl-tRNAs (with 1 or more amino acids incorporated), which drop off the ribosome during protein synthesis, or as a result of ribosome stalling. Catalyzes the release of premature peptidyl moieties from peptidyl-tRNA molecules trapped in stalled 50S ribosomal subunits, and thus maintains levels of free tRNAs and 50S ribosomes. This is Peptidyl-tRNA hydrolase from Ruthia magnifica subsp. Calyptogena magnifica.